Consider the following 215-residue polypeptide: Urease accessory protein UreG (215 aa).

A GTP-binding site is contributed by 24–31 (GPVGSGKT).

It belongs to the SIMIBI class G3E GTPase family. UreG subfamily. Homodimer. UreD, UreF and UreG form a complex that acts as a GTP-hydrolysis-dependent molecular chaperone, activating the urease apoprotein by helping to assemble the nickel containing metallocenter of UreC. The UreE protein probably delivers the nickel.

The protein localises to the cytoplasm. In terms of biological role, facilitates the functional incorporation of the urease nickel metallocenter. This process requires GTP hydrolysis, probably effectuated by UreG. The chain is Urease accessory protein UreG from Burkholderia orbicola (strain MC0-3).